The sequence spans 35 residues: Tamulustoxin (35 aa).

Cystine bridges form between Cys2–Cys22, Cys7–Cys31, and Cys11–Cys33.

Expressed by the venom gland.

The protein resides in the secreted. Its function is as follows. Blocks Kv1.6/KCNA6 potassium channels. This is Tamulustoxin from Hottentotta tamulus (Eastern Indian scorpion).